Reading from the N-terminus, the 195-residue chain is Ribonuclease HII (195 aa).

The RNase H type-2 domain maps to 1 to 195 (MICGIDEAGR…SWRTLRYLNT (195 aa)). 3 residues coordinate a divalent metal cation: D6, E7, and D101.

The protein belongs to the RNase HII family. Mn(2+) serves as cofactor. Mg(2+) is required as a cofactor.

Its subcellular location is the cytoplasm. The enzyme catalyses Endonucleolytic cleavage to 5'-phosphomonoester.. In terms of biological role, endonuclease that specifically degrades the RNA of RNA-DNA hybrids. The polypeptide is Ribonuclease HII (Pyrobaculum islandicum (strain DSM 4184 / JCM 9189 / GEO3)).